The following is a 304-amino-acid chain: tRNA dimethylallyltransferase (304 aa).

Residue 13-20 (GPTAAGKT) coordinates ATP. 15 to 20 (TAAGKT) contributes to the substrate binding site. Positions 38-41 (DSRQ) are interaction with substrate tRNA.

The protein belongs to the IPP transferase family. In terms of assembly, monomer. It depends on Mg(2+) as a cofactor.

The catalysed reaction is adenosine(37) in tRNA + dimethylallyl diphosphate = N(6)-dimethylallyladenosine(37) in tRNA + diphosphate. In terms of biological role, catalyzes the transfer of a dimethylallyl group onto the adenine at position 37 in tRNAs that read codons beginning with uridine, leading to the formation of N6-(dimethylallyl)adenosine (i(6)A). The sequence is that of tRNA dimethylallyltransferase from Cytophaga hutchinsonii (strain ATCC 33406 / DSM 1761 / CIP 103989 / NBRC 15051 / NCIMB 9469 / D465).